The following is a 363-amino-acid chain: Early boundary activity protein 1 (363 aa).

A compositionally biased stretch (basic and acidic residues) spans 155-168; the sequence is MDQEPEHKQSHEQD. Residues 155–242 are disordered; that stretch reads MDQEPEHKQS…NAKRRCPGFE (88 aa). Residues 198-209 show a composition bias toward acidic residues; sequence EDLGLDDDDEDY. The BEN domain occupies 255–354; it reads GPNGTEVSRI…TKCADENKML (100 aa).

The heterotrimeric Elba complex consists of Elba1, Elba2 and Elba3.

Its subcellular location is the nucleus. In terms of biological role, the heterotrimeric Elba complex is required for chromatin domain boundary function during early embryogenesis. It binds to a 8-bp sequence 5'-CCAATAAG-3' in the Fab-7 insulator or boundary element in the bithorax complex and contributes to its insulator or boundary activity. Elba1 may act as a transcriptional repressor and binds the palindromic sequence 5'-CCAATTGG-3' to mediate transcriptional repression. This chain is Early boundary activity protein 1, found in Drosophila melanogaster (Fruit fly).